Reading from the N-terminus, the 31-residue chain is Potassium channel toxin alpha-KTx 19.2 (31 aa).

Cystine bridges form between C3/C22, C8/C27, and C12/C29.

Belongs to the short scorpion toxin superfamily. Potassium channel inhibitor family. Alpha-KTx 19 subfamily. Monomer. As to expression, expressed by the venom gland.

The protein localises to the secreted. Functionally, blocks voltage-gated potassium channels rKv1.1/KCNA1, rKv1.2/KCNA2, hKv1.3/KCNA3, rKv1.6/KCNA6 (IC(50)=75.9 nM) and, to a lesser extent, Shaker IR (with the inactivation domain removed). The sequence is that of Potassium channel toxin alpha-KTx 19.2 from Buthus occitanus tunetanus (Common European scorpion).